Consider the following 522-residue polypeptide: Berberine bridge enzyme-like Cyn d 4 (522 aa).

The N-terminal stretch at 1 to 25 (MARSRAFAFALLICAVAASCHVALS) is a signal peptide. Cysteines 41 and 98 form a disulfide. The 177-residue stretch at 76-252 (KTVKPLYIIT…ASWQVKLLPV (177 aa)) folds into the FAD-binding PCMH-type domain. Residue Asn-88 is glycosylated (N-linked (GlcNAc...) asparagine). FAD-binding positions include 108-114 (VRSGGHD), Ser-119, Ser-152, 176-177 (VC), 181-185 (GVGGH), Phe-191, Glu-237, and Val-242. A cross-link (6-(S-cysteinyl)-8alpha-(pros-histidyl)-FAD (His-Cys)) is located at residues 113 to 177 (HDYEGLSYRS…PKLGFPAGVC (65 aa)). A disulfide bridge connects residues Cys-308 and Cys-329. 2 N-linked (GlcNAc...) asparagine glycosylation sites follow: Asn-325 and Asn-354. Residue 461-465 (YVNYR) coordinates FAD. N-linked (GlcNAc...) asparagine glycosylation occurs at Asn-477.

This sequence belongs to the oxygen-dependent FAD-linked oxidoreductase family. As to quaternary structure, monomer. The cofactor is FAD. The FAD cofactor is bound via a bicovalent 6-S-cysteinyl, 8alpha-N1-histidyl FAD linkage. In terms of processing, the N-terminus is blocked. Post-translationally, glycosylated. N-glycosylated. Contains fucose, N-acetylglucosamine, and mannose as main carbohydrates (in a ratio of approximately 3:2:1), and a minute amount of xylose. The two most abundant oligosaccharides are Fuc(1)GlcNAc(2)Man(3) and Fuc(1)GlcNAc(2)Man(2), together comprising about 80% of the total carbohydrate content. They are structurally unusual in having a L-Fuc alpha-(1,3)-linked to Asn-linked GlcNAc without a Xyl beta-(1,2)-linked to the branching Man. The other oligosaccharides make up only 9% of the total carbohydrate content and are characterized by the presence of Xyl beta-(1,2)-linked to the branching Man. Expressed in pollen (at protein level).

The protein is Berberine bridge enzyme-like Cyn d 4 of Cynodon dactylon (Bermuda grass).